A 400-amino-acid polypeptide reads, in one-letter code: Aminomethyltransferase, mitochondrial (400 aa).

3 residues coordinate substrate: glutamate 221, arginine 250, and tyrosine 397.

This sequence belongs to the GcvT family. As to quaternary structure, component of the glycine decarboxylase complex (GDC), which is composed of four proteins: P, T, L and H.

The protein localises to the mitochondrion. The catalysed reaction is N(6)-[(R)-S(8)-aminomethyldihydrolipoyl]-L-lysyl-[protein] + (6S)-5,6,7,8-tetrahydrofolate = N(6)-[(R)-dihydrolipoyl]-L-lysyl-[protein] + (6R)-5,10-methylene-5,6,7,8-tetrahydrofolate + NH4(+). Functionally, the glycine cleavage system (glycine decarboxylase complex) catalyzes the degradation of glycine. The protein is Aminomethyltransferase, mitochondrial (GCV1) of Saccharomyces cerevisiae (strain ATCC 204508 / S288c) (Baker's yeast).